A 228-amino-acid chain; its full sequence is Putative NAC domain-containing protein 61 (228 aa).

The 152-residue stretch at Leu5–Arg156 folds into the NAC domain. 2 disordered regions span residues Ala77–Ser96 and Arg166–Leu197. Positions Gly80 to Gly89 are enriched in low complexity. The span at Leu168–Asn193 shows a compositional bias: polar residues.

The protein resides in the nucleus. This chain is Putative NAC domain-containing protein 61 (NAC061), found in Arabidopsis thaliana (Mouse-ear cress).